Here is a 683-residue protein sequence, read N- to C-terminus: Solute carrier organic anion transporter family member 2B1 (683 aa).

The interval 1-30 is disordered; it reads MPDRSTKTTMGTEDMHERKVSVEPQDSHQD. Topologically, residues 1–41 are cytoplasmic; sequence MPDRSTKTTMGTEDMHERKVSVEPQDSHQDAQPRGMFHNIK. A compositionally biased stretch (basic and acidic residues) spans 13–30; it reads EDMHERKVSVEPQDSHQD. S21 is subject to Phosphoserine. Residues 42 to 61 traverse the membrane as a helical segment; that stretch reads FFVLCHSLLQLTQLMISGYL. At 62–80 the chain is on the extracellular side; sequence KSSISTVEKRFGLSSQISG. A helical transmembrane segment spans residues 81–101; the sequence is LLAAFNEVGNVSLILFVSYFG. Residues 102 to 107 are Cytoplasmic-facing; the sequence is SRVHRP. The helical transmembrane segment at 108 to 132 threads the bilayer; that stretch reads RMIGYGALLVATAGLLMALPHFISE. Over 133-177 the chain is Extracellular; the sequence is PYRYDHSSSDNRSLDFEASLCLPTTMAPASALSNGSCSSHTETKH. Residues N143 and N166 are each glycosylated (N-linked (GlcNAc...) asparagine). A helical membrane pass occupies residues 178 to 207; it reads LTMVGIMFAAQTLLGIGGVPIQPFGISYID. At 208-226 the chain is on the cytoplasmic side; it reads DFAHHSNSPLYIGILFGIT. Residues 227-247 traverse the membrane as a helical segment; that stretch reads TMGPGLAYGLGSLMLRLYVDI. Residues 248-265 lie on the Extracellular side of the membrane; sequence DRMPEGGINLTPKDPRWV. Residues 266–290 form a helical membrane-spanning segment; the sequence is GAWWLGFLISSGLVVLASSPYFFFP. The Cytoplasmic segment spans residues 291–355; the sequence is REMPKEKHEF…VKVFPRVLLR (65 aa). Phosphoserine occurs at positions 312 and 315. Residues 356 to 377 form a helical membrane-spanning segment; the sequence is NLRHPIFLLVVLSQVCTSSMVA. Over 378 to 397 the chain is Extracellular; that stretch reads GMATFLPKFLERQFSITASF. A helical transmembrane segment spans residues 398-421; the sequence is ANMLLGCLTIPLVIVGIMMGGVLV. The Cytoplasmic portion of the chain corresponds to 422–425; that stretch reads KRLH. The helical transmembrane segment at 426-449 threads the bilayer; it reads LSPVQCSALCLLGSLLCLLFSVPL. At 450–553 the chain is on the extracellular side; that stretch reads FFIGCSTHQI…SACSRLVLPF (104 aa). The 61-residue stretch at 472–532 folds into the Kazal-like domain; that stretch reads PSLFPGCSEP…VFYTNCSCVA (61 aa). Intrachain disulfides connect C478–C509, C484–C505, and C493–C530. 2 N-linked (GlcNAc...) asparagine glycosylation sites follow: N527 and N534. The helical transmembrane segment at 554-576 threads the bilayer; it reads IVLFSLGAGLASITHTPSFMLIL. The Cytoplasmic portion of the chain corresponds to 577–585; sequence RGVKKEDKT. A helical transmembrane segment spans residues 586–611; it reads LAVGMQFMLLRVLAWMPSPVIHGSAI. Residues 612–644 are Extracellular-facing; that stretch reads DTTCVHWALTCGRRAVCRYYDHDLLRNRFIGLQ. The helical transmembrane segment at 645–662 threads the bilayer; the sequence is FFFKSGSLVCFTLVLAIL. Over 663–683 the chain is Cytoplasmic; it reads RQQSREASTRTTVKSSELQQL.

Belongs to the organo anion transporter (TC 2.A.60) family. As to expression, expressed in liver, kidney, small intestine mucosa, large intestine, brain, lung, spleen, stomach and heart.

The protein resides in the cell membrane. It is found in the basal cell membrane. The protein localises to the apical cell membrane. It carries out the reaction dehydroepiandrosterone 3-sulfate(out) = dehydroepiandrosterone 3-sulfate(in). The enzyme catalyses estrone 3-sulfate(out) = estrone 3-sulfate(in). It catalyses the reaction estrone 3-sulfate(out) + hydrogencarbonate(in) = estrone 3-sulfate(in) + hydrogencarbonate(out). The catalysed reaction is taurocholate(out) = taurocholate(in). It carries out the reaction coproporphyrin III(out) = coproporphyrin III(in). The enzyme catalyses substance P(out) = substance P(in). It catalyses the reaction pregnenolone sulfate(out) = pregnenolone sulfate(in). The catalysed reaction is prostaglandin E2(out) = prostaglandin E2(in). It carries out the reaction prostaglandin D2(out) = prostaglandin D2(in). The enzyme catalyses L-thyroxine(out) = L-thyroxine(in). In terms of biological role, mediates the Na(+)-independent transport of steroid sulfate conjugates such as estrone 3-sulfate (E1S), dehydroepiandrosterone sulfate (DHEA-S) and pregnenolone sulfate (PregS) and other specific organic anions. Responsible for the transport of E1S through the basal membrane of syncytiotrophoblast, highlighting a potential role in the placental absorption of fetal-derived sulfated steroids including DHEA-S. Also facilitates the uptake of sulfated steroids at the basal/sinusoidal membrane of hepatocytes, therefore accounting for the major part of organic anions clearance of liver. Mediates the intestinal uptake of sulfated steroids. Mediates the uptake of the neurosteroids DHEA-S and PregS into the endothelial cells of the blood-brain barrier as the first step to enter the brain. Also plays a role in the reuptake of neuropeptides such as substance P/TAC1 and vasoactive intestinal peptide/VIP released from retinal neurons. May act as a heme transporter that promotes cellular iron availability. Also transports heme by-product coproporphyrin III (CPIII), and may be involved in their hepatic disposition. Mediates the uptake of other substrates such as prostaglandins D2 (PGD2), E1 (PGE1) and E2 (PGE2), taurocholate, L-thyroxine, leukotriene C4 and thromboxane B2. May contribute to regulate the transport of organic compounds in testis across the blood-testis-barrier. Shows a pH-sensitive substrate specificity which may be ascribed to the protonation state of the binding site and leads to a stimulation of substrate transport in an acidic microenvironment. The exact transport mechanism has not been yet deciphered but most likely involves an anion exchange, coupling the cellular uptake of organic substrate with the efflux of an anionic compound. Hydrogencarbonate/HCO3(-) acts as a probable counteranion that exchanges for organic anions. Cytoplasmic glutamate may also act as counteranion in the placenta. An inwardly directed proton gradient has also been proposed as the driving force of E1S uptake with a (H(+):E1S) stoichiometry of (1:1). The sequence is that of Solute carrier organic anion transporter family member 2B1 from Mus musculus (Mouse).